Reading from the N-terminus, the 450-residue chain is Molybdate-anion transporter (450 aa).

12 helical membrane-spanning segments follow: residues 1–21 (MLVT…GLEL), 43–63 (LDFY…APYL), 79–99 (ILYV…SSLV), 128–148 (FVLL…FSAF), 174–194 (AAFW…AVAS), 195–215 (WIGL…ALAG), 249–269 (VLLL…FVFL), 278–298 (GAPL…GSSL), 311–331 (PMHL…MLTF), 344–364 (FIAF…MSFL), 376–396 (GVLN…LLVL), and 409–429 (FSIC…LFTV).

This sequence belongs to the major facilitator superfamily.

Its subcellular location is the cell membrane. Its function is as follows. Mediates high-affinity intracellular uptake of the rare oligo-element molybdenum. The chain is Molybdate-anion transporter (MFSD5) from Pongo abelii (Sumatran orangutan).